A 403-amino-acid polypeptide reads, in one-letter code: MSSTKKDIKVYVNYRDEYAEPKIISALKNSGKELTFTNSAKEANFQWAQYEDIDFDEVYKNPKTKLCCSYVIRKALIRKEYLWRTVITYLAKHPDSILSKSVPEAYSLELDYAEFLDDSLMEAYELRQELEENATKNISEKQWYILKPSMCDRAQGIRLFSTIEELQAIFDSFDDEESESEEAGLEEKGDITVAFNNKIVISQIRNFLVQKYISKPLLLDHRKFHIRAYVLATGALSVYLFNEMLCLLARDKYKKPTPDPDLLFSHLSNTCLQGDNVEQSSIRDFWNTSIENKDDIFKSILNIIGDVFEAAATTQGIHFQPLENCFEIFGVDFLVDCESQVYLLEVNSYPDFKQTGKNLSNIIENLFSAVVETAIIPFFESSTKRNVDSKLTLAKKLQLFGFR.

In terms of domain architecture, TTL spans 9 to 386; sequence KVYVNYRDEY…PFFESSTKRN (378 aa).

Belongs to the tubulin--tyrosine ligase family. Mg(2+) serves as cofactor. K(+) is required as a cofactor.

It is found in the cytoplasm. The protein localises to the nucleus. It carries out the reaction C-terminal L-alpha-aminoacyl-L-glutamyl-L-glutamyl-[tubulin] + L-tyrosine + ATP = C-terminal L-alpha-aminoacyl-L-glutamyl-L-glutamyl-L-tyrosyl-[tubulin] + ADP + phosphate + H(+). Its function is as follows. Probable tubulin--tyrosine ligase. This chain is Probable tubulin--tyrosine ligase C12B10.04, found in Schizosaccharomyces pombe (strain 972 / ATCC 24843) (Fission yeast).